A 108-amino-acid chain; its full sequence is MDIVKVCPEIQIAMDIDSGLIAEMRKDILVVDLHPVEDEINRLAQYAKALENSLDPRNSPMKAYAGREGTYKLAGMFQGMFFGFWVTMAILVLVTILAVKMNLSLIGL.

The chain crosses the membrane as a helical span at residues 79–99 (GMFFGFWVTMAILVLVTILAV).

This sequence belongs to the MtrB family. In terms of assembly, the complex is composed of 8 subunits; MtrA, MtrB, MtrC, MtrD, MtrE, MtrF, MtrG and MtrH.

Its subcellular location is the cell membrane. The enzyme catalyses 5-methyl-5,6,7,8-tetrahydromethanopterin + coenzyme M + 2 Na(+)(in) = 5,6,7,8-tetrahydromethanopterin + methyl-coenzyme M + 2 Na(+)(out). Its pathway is one-carbon metabolism; methanogenesis from CO(2); methyl-coenzyme M from 5,10-methylene-5,6,7,8-tetrahydromethanopterin: step 2/2. Its function is as follows. Part of a complex that catalyzes the formation of methyl-coenzyme M and tetrahydromethanopterin from coenzyme M and methyl-tetrahydromethanopterin. This is an energy-conserving, sodium-ion translocating step. In Methanococcus maripaludis (strain C5 / ATCC BAA-1333), this protein is Tetrahydromethanopterin S-methyltransferase subunit B.